The primary structure comprises 101 residues: Gamma-secretase subunit PEN-2 (101 aa).

Residues 1 to 17 are Cytoplasmic-facing; that stretch reads MNLERVSNEEKLNLCRK. An intramembrane region (helical) is located at residues 18-36; sequence YYLGGFAFLPFLWLVNIFW. Topologically, residues 37–57 are cytoplasmic; that stretch reads FFREAFLAPAYTEQSQIKGYV. A helical membrane pass occupies residues 58-78; sequence WRSAVGFLFWVIILATWITIF. Topologically, residues 79 to 101 are lumenal; the sequence is QIYRPRWGALGDYLSFTIPLGTP.

It belongs to the PEN-2 family. The functional gamma-secretase complex is composed of at least four polypeptides: a presenilin homodimer (PSEN1 or PSEN2), nicastrin (NCSTN), APH1 (APH1A or APH1B) and PSENEN.

It localises to the endoplasmic reticulum membrane. Its subcellular location is the golgi apparatus. It is found in the golgi stack membrane. The protein localises to the cell membrane. The protein resides in the membrane. Functionally, essential subunit of the gamma-secretase complex, an endoprotease complex that catalyzes the intramembrane cleavage of integral membrane proteins such as Notch receptors and APP (amyloid-beta precursor protein). The gamma-secretase complex plays a role in Notch and Wnt signaling cascades and regulation of downstream processes via its role in processing key regulatory proteins, and by regulating cytosolic CTNNB1 levels. PSENEN modulates both endoproteolysis of presenilin and gamma-secretase activity. This is Gamma-secretase subunit PEN-2 (Psenen) from Mus musculus (Mouse).